A 202-amino-acid polypeptide reads, in one-letter code: Holliday junction branch migration complex subunit RuvA (202 aa).

The tract at residues 1–65 (MIGYLEGRVV…EDALELFGFA (65 aa)) is domain I. Residues 66 to 144 (SLDDRETFRT…GRAPAAGLAP (79 aa)) are domain II. A flexible linker region spans residues 145 to 155 (SVPIPGGVAGD). The interval 155-202 (DVVAGLTNLGYPEPEARQVAAEVLEAEPDLDVAAALRQALKRLASAKK) is domain III.

It belongs to the RuvA family. As to quaternary structure, homotetramer. Forms an RuvA(8)-RuvB(12)-Holliday junction (HJ) complex. HJ DNA is sandwiched between 2 RuvA tetramers; dsDNA enters through RuvA and exits via RuvB. An RuvB hexamer assembles on each DNA strand where it exits the tetramer. Each RuvB hexamer is contacted by two RuvA subunits (via domain III) on 2 adjacent RuvB subunits; this complex drives branch migration. In the full resolvosome a probable DNA-RuvA(4)-RuvB(12)-RuvC(2) complex forms which resolves the HJ.

The protein resides in the cytoplasm. Its function is as follows. The RuvA-RuvB-RuvC complex processes Holliday junction (HJ) DNA during genetic recombination and DNA repair, while the RuvA-RuvB complex plays an important role in the rescue of blocked DNA replication forks via replication fork reversal (RFR). RuvA specifically binds to HJ cruciform DNA, conferring on it an open structure. The RuvB hexamer acts as an ATP-dependent pump, pulling dsDNA into and through the RuvAB complex. HJ branch migration allows RuvC to scan DNA until it finds its consensus sequence, where it cleaves and resolves the cruciform DNA. The polypeptide is Holliday junction branch migration complex subunit RuvA (Solidesulfovibrio magneticus (strain ATCC 700980 / DSM 13731 / RS-1) (Desulfovibrio magneticus)).